A 203-amino-acid chain; its full sequence is Suppressor/enhancer of lin-12 protein 9 (203 aa).

The N-terminal stretch at 1-18 (MNSLTWILAVLFVTPAAS) is a signal peptide. The Lumenal portion of the chain corresponds to 19–170 (YFIHVDANEE…RNINENTNSR (152 aa)). Residues 28 to 110 (EQCFFDRLTS…PKAVMFTVEI (83 aa)) enclose the GOLD domain. A helical membrane pass occupies residues 171 to 191 (VVMWAAFEAFVLVGMTVGQIF). Topologically, residues 192 to 203 (YLKRFFEVRTMV) are cytoplasmic.

The protein belongs to the EMP24/GP25L family.

The protein localises to the cytoplasmic vesicle membrane. The protein resides in the cytoplasmic vesicle. It localises to the COPI-coated vesicle membrane. Its subcellular location is the golgi apparatus membrane. Functionally, may have a role in the negative regulation of lin-12 and glp-1 transport to the cell surface. May also have a role in a quality control mechanism for endoplasmic reticulum-Golgi transport; the budding of coatomer-coated and other species of coated vesicles, could bind cargo molecules to collect them into budding vesicles. Involved in regulating the expression of proteasomal subunits such as rpt-3 in order to confer resistance to proteasomal dysfunction. This chain is Suppressor/enhancer of lin-12 protein 9 (sel-9), found in Caenorhabditis elegans.